A 286-amino-acid polypeptide reads, in one-letter code: Phosphoribosylaminoimidazole-succinocarboxamide synthase (286 aa).

It belongs to the SAICAR synthetase family.

It carries out the reaction 5-amino-1-(5-phospho-D-ribosyl)imidazole-4-carboxylate + L-aspartate + ATP = (2S)-2-[5-amino-1-(5-phospho-beta-D-ribosyl)imidazole-4-carboxamido]succinate + ADP + phosphate + 2 H(+). It participates in purine metabolism; IMP biosynthesis via de novo pathway; 5-amino-1-(5-phospho-D-ribosyl)imidazole-4-carboxamide from 5-amino-1-(5-phospho-D-ribosyl)imidazole-4-carboxylate: step 1/2. The protein is Phosphoribosylaminoimidazole-succinocarboxamide synthase (purC) of Pasteurella multocida (strain Pm70).